Here is a 429-residue protein sequence, read N- to C-terminus: MIGAVNSVEAVITSIQGLSGSPEDLSALHDLLRGAQDSLRAEPGVNFSTLDQLDASKHSLGYLYFLEVLTCGPVSKEKAAYEIPIIARFINSCDAGQIRLASYKFVSLCKILKDHVIALGDPLRGVGPLLNAVQKLQVSSKRLTALHPDVLQLCLQAKSYKSGFSILSDDIVEIDQPRDFFLYSYYGGMICIGLKRFQKALELLYNVVTAPMHQVNAIALEAYKKYILVSLIHNGQFTNTLPKCASTAAQRSFKNYTGPYIELGNCYNDGKIGELEALVVARNAEFEEDKNLGLVKQAVSSLYKRNILRLTQKYLTLSLQDIANMVQLGNAKEAEMHVLQMIQDGQIHALINQKDGMVRFLEDPEQYKSSEMIEIMDSVIQRTIGLSKNLLAMDESLSCDPLYLGKVGRERQRYDFGDDFDTVPQKFSM.

In terms of domain architecture, PCI spans 196–365 (RFQKALELLY…GMVRFLEDPE (170 aa)).

Belongs to the CSN3 family. In terms of assembly, component of the CSN complex, probably composed of CSN1, CSN2, CSN3, CSN4, CSN5 (CSN5A or CSN5B), CSN6 (CSN6A or CSN6B), CSN7 and CSN8. In the CSN complex, it probably interacts directly with CSN1, CSN4, CSN6 and CSN8. Interacts with COP10.

Its subcellular location is the cytoplasm. The protein localises to the nucleus. Functionally, component of the COP9 signalosome complex (CSN), a complex involved in various cellular and developmental processes such as photomorphogenesis and auxin and jasmonate responses. The CSN complex is an essential regulator of the ubiquitin (Ubl) conjugation pathway by mediating the deneddylation of the cullin subunits of SCF-type E3 ligase complexes, leading to decrease the Ubl ligase activity of SCF. It is involved in repression of photomorphogenesis in darkness by regulating the activity of COP1-containing Ubl ligase complexes. The complex is also required for degradation of IAA6 by regulating the activity of the Ubl ligase SCF-TIR complex. This chain is COP9 signalosome complex subunit 3 (CSN3), found in Arabidopsis thaliana (Mouse-ear cress).